We begin with the raw amino-acid sequence, 50 residues long: Protein hunchback (50 aa).

C2H2-type zinc fingers lie at residues 1 to 5 (HLRNH), 11 to 33 (FKCG…MKSH), and 39 to 50 (YRCANCCYATKY).

This sequence belongs to the hunchback C2H2-type zinc-finger protein family.

Its subcellular location is the nucleus. In terms of biological role, gap class segmentation protein that controls development of head structures. This chain is Protein hunchback (hb), found in Pholcus phalangioides (Longbodied cellar spider).